The following is a 596-amino-acid chain: Protein Malvolio (596 aa).

Positions 1–34 are disordered; sequence MSSNEAYHEPGAGGDGPGGSSGASGGGSQRSNQL. Positions 11 to 28 are enriched in gly residues; the sequence is GAGGDGPGGSSGASGGGS. N41 is a glycosylation site (N-linked (GlcNAc...) asparagine). 7 helical membrane passes run 77-97, 105-125, 154-174, 186-206, 216-236, 263-283, and 309-329; these read LWAF…PGNI, AAAK…GLLM, WILW…EVIG, VVPL…FLFL, FLFG…YIVS, AVGV…SALV, and VALF…AHGM. N359 is a glycosylation site (N-linked (GlcNAc...) asparagine). The next 5 membrane-spanning stretches (helical) occupy residues 373-393, 424-444, 463-483, 490-510, and 520-540; these read LFLG…GILA, VLVT…FSKM, PFAA…GEFV, IVSI…VVVQ, and LLAL…YLVI. A glycan (N-linked (GlcNAc...) asparagine) is linked at N574.

The protein belongs to the NRAMP family. Expressed in macrophages and in the nervous system.

The protein resides in the membrane. Putative transporter required for normal taste behavior. May be a nitrite/nitrate transporter. The sequence is that of Protein Malvolio (Mvl) from Drosophila melanogaster (Fruit fly).